Here is a 551-residue protein sequence, read N- to C-terminus: Cation/acetate symporter ActP (551 aa).

The next 14 helical transmembrane spans lie at 8 to 28, 35 to 55, 78 to 98, 105 to 125, 151 to 171, 185 to 205, 208 to 228, 264 to 284, 305 to 325, 357 to 377, 406 to 426, 430 to 450, 465 to 485, and 496 to 516; these read ALAA…TGAV, WQAI…TYWA, GLAI…SALV, GLIY…LIAE, LSAC…MVGA, VAVV…GMLA, WVQI…AFMV, ISAL…PHIL, GFMG…IMLV, LFLG…VAGL, VSKI…ILFE, IAFM…PIIL, VGGW…PTIW, and FPYE…IWVF.

The protein belongs to the sodium:solute symporter (SSF) (TC 2.A.21) family.

The protein localises to the cell inner membrane. In terms of biological role, transports acetate. This is Cation/acetate symporter ActP from Klebsiella pneumoniae (strain 342).